Reading from the N-terminus, the 921-residue chain is Guanylate kinase-associated protein mars (921 aa).

Serine 49 is modified (phosphoserine). Threonine 51 bears the Phosphothreonine mark. Residues serine 76 and serine 170 each carry the phosphoserine modification. Tyrosine 172 carries the phosphotyrosine modification. 2 disordered regions span residues 179–208 and 273–325; these read GKGK…TVAA and RPTP…PLGN. Low complexity-rich tracts occupy residues 193-208 and 273-285; these read KPTS…TVAA and RPTP…AKTP. A Phosphoserine modification is found at serine 444. Residues 500–531 form a disordered region; it reads QTTVKEDTGDSTLVPEGTKTPPRRESNGMPNY. At threonine 519 the chain carries Phosphothreonine. Serine 554 is modified (phosphoserine). Disordered stretches follow at residues 641–660 and 743–763; these read AGAT…SKPV and TKVE…RHSS. 2 positions are modified to phosphoserine: serine 785 and serine 792. 2 disordered regions span residues 809 to 833 and 861 to 921; these read QNAA…TKRQ and ETVG…SEFM. Threonine 826 is subject to Phosphothreonine. Residues 878-907 are compositionally biased toward polar residues; it reads EASTESGSLEQNPGRDSNQENEATPRTYTL.

This sequence belongs to the SAPAP family. As to expression, expressed in the central nervous system and at different stages of gametogenesis. In embryos, it is expressed in central nervous system and brain. In testis, it is strongly expressed in pre-meiotic germ cells, but is not found in somatic or post-meiotic cells.

The protein resides in the cell membrane. Its subcellular location is the nucleus. It localises to the nucleoplasm. The protein localises to the cytoplasm. It is found in the cytoskeleton. The protein resides in the spindle. Functionally, cell cycle regulator. This chain is Guanylate kinase-associated protein mars (mars), found in Drosophila melanogaster (Fruit fly).